A 2957-amino-acid polypeptide reads, in one-letter code: MKGIEGVIMLSHDILPEKLLVSEKKHENVGSYFSDDIGEQSEQTEVSHFNLSLDDAFDIYADISIENQQELKNKDNNTNIWSSLGRGDDDHNLKKIINDAFKEKLPQLMEYRRKGYNVIGLDKEGIKKLEGMLKAVPPEIQQPTMKNLYSAAQELLNTLKQHPLLPENQDMIQQSNLVIRNLSDALEAINAVSKVNQVEWWEEVHKTNKAQSDRLIAATLEELFFKVKDKRLPGSNDDYCQQEREETERKIKDLLLYDGYQLTAEHFKFGRLRKSLLAESRVTRLKLAEYLEKKSVGILTAARDAKMYAMKILLAQTRNNGFNAKDLINAGQVNDRLLSFQQYARHIRAVDGEIDGIILSNPLVVACIKETNDEPAHIKIARAILPVSEELGTVSKVLRETKEKVQPSKPKEELNHPHQDWWNRGDELWKYIKKTSWNIKETSVHVTQMVGYEASKTASRAKHKLKESSYSESINGAVKGTALLLLDEIQQAENRIRQIPQFAWDVQEAVEQHSSVIQRTAYPDELPELSELLNEQLKHEEARWQAVKKQSRDKLQELIAPITRLAQEKWAQDLYFQLGEELRKERQDRWKDIQQFDEIMAEAVGQFAEMARELDSEAVRLAEHGHSGGKELQEKVAKWLRDLSKLKGKVKAGVAKITGTSLDNFSRSGMLARGMSEWAEDLKQSYLQETLQEGSAVAAELFERTLMEVVEENRTHFAKESDPEAERFLKRLALALKHAAENTTVYPPTPEEILAGSRSLPEDIRHWAEKKVVSGAISAAFRGGFKLVTGTFSLPVRVVIRGAKTGGTLYRGVRAINRSVRLGQGPATQVKSKFINQELSKTAFRLTLSLSPLVAWGMAASITAGRLYNEKDYPEKIIKNIVIDLPEELLWIGGYAGINAAIRAHAEKAIQQAIQHALDEQADKLALRINKEIAGKSADVNVEIIPQETSVSPAETAQSTPEPLSDFASTSQLTMPELIDIQDNNSAQQPKVRRKRDVSVESEISIDNLNIINANTREDKVNSEIKSELRSELKRFENSDANSPMSDVERAIFIDLFLYKNKYEVSESQQDYKNTWLKFRRELESQENKEIKEYLRFRSIIEAYEIYDKKRLDDDTIPEAGTIIKEVIDFFQKLKKENPITFMKLAEAMVKFQYYYEEEDENEDRYFKMAEIYYFLNKTENEKKSKTFHLDIIDKYPNENNRLLDEFFLNKNNNNPDLDEIIYKLQSMQEKYRESYEMLSKVENIHQVLSDDSKNEENIFLDNRIIAAQVFDGSINISLQDKKKWLNRYDQIRNEEGSDGWKLMHIESILINLRRINTAINLTAMKSESALLLIDKLLNFQKKARENILHISETPHEDFTSYSQFKTRKELGNDDSKYYAQFDNYKDNHDAEKEAKEILSQVVARASLSFSELFDKVESIKLFSFVYKNRDGGAPLAAPGRTVVIKFPGKDTGGLVISNLFLRNHVKRISTKEMEDLKPLTEGMYTRATQHRSLGSYYHIGSQSEHTNALEILSGMNKEELKTHLKKQGIWFGEPALFSNEYPKQENTGHLENTTLKNAIIGVSTIQNNAAANYLRSTMYESTGWEKLGDRFIPFYEIGRRKHYDREYEINSEQLTLDIITSIAIAYPAARGIVATIRSSAIPSILKSGLRGSALFKSLSLELGKMGFNASKVFGGAVYELIEPYPINSHLNRHNVFNKVKDTAWEFHTDVGLKGGGLKDFIDRFTKEPKEITISGYKFKRIKYNQENFDTMQRMALDYAYNPDSKGKIAQAQQAYKTGKEDYNAPQYDNFNGLSLDKKIERYISPDTDATTKGVLAGKMNESIKDINAFQTAKDAQSWKKSANKANKVVLTPQNLYLKGKPSECLPESVLMGWALQSSQDAKLSKMLMGIYSSNDITSNPLYKSLKELHANGNASKFNASATSISNINVSNLATSETKLFPTEISSVRVDAPKHTMLISKIKNRENKIKYVFYDPNYGMAYFDKHSDMAAFFQKKMQQYDFPDDSVSFHPLDYSNVSDIKISGRNLNEIIDGEIPLLYKQEGVQLEGITPRDGIYRVPPKNTLGVQETKHYIIVNNDIYQVEWDQTNNTWRVFDPSNTNRSRPTVPVKQDTNGEWFKHSETGLKGGGPIDDIRKYIARKSAIKIFNQSINYSATKWPPEPIDKNIHMIWIGTKNISEKNIKLSIDTAKKNPDYNTSIIYDSGISGHEGAKKFMLEKFQDSNVNIIDFRKKSYFSQLKQEPSFAYYEQVIAENKYAQASDILRLLVLKYEGGIYKDIDDIQVKGFGSLTFPKGIGVMREYAPEAGKATAFPNTPIAVTKNNPIINKTLDLAVSNYQRGEKNVLKLAGPDVFTQALYQEIPGLDSKVLNAQLYQLELAKRQALGVPLEKPKNFADEQLTSAEKEKINRPYQSIRGLSGYVENGADHSWAVDTNIPSTSTQTSTIVTPLAPKTEMLPPVPSSSTKSSTSAPVLQEKISYNLATDIDATDYLNQLKQKTNINNKISSPAGQCESLMKPVSDFMRENGFTDIRYRGMFIWNNATEQIPMNHFVVVGKKVGKDYVFDVSAHQFENKGMPDLNGPLILAAEDWAKKYRGATTRKLIYYSDFKNASTATNTYNALPRELVLESMEGKTFITSPNWYQTFKRTHNIHPEVTVSDPATFSLNYSVNPTAENLSPPPPPPIPSHGQVPKTVTPPPPPMRSPLSLSQPLERLPANKTKPIGFNPGENKASFSKLEEAGKHYYKDDKSRQAAPVNTMSDFDNRYLSHTTEAPAPSNVAHLAPGNIYNTKVTAKGAEKPAYDIYISKDGESLITSSSYKVDDITTDSKFGKPLPYSEIMFNSLKKSGVDPKNLKRSVQASIENKVTQDVISAIGTRIQRGQVIRVSPTENPDAFYTLLGTDNCKATLHMLNQHAEEFGHKVVTSIEFKGTGYLVMNIGTSTQTSTIVTPPPMPGTSQLVQ.

Positions 949–968 (TSVSPAETAQSTPEPLSDFA) are disordered. The tract at residues 2115–2144 (EWFKHSETGLKGGGPIDDIRKYIARKSAIK) is membrane localization domain that interacts with the inner leaflet of the plasma membrane. Positions 2115–2449 (EWFKHSETGL…TSTIVTPLAP (335 aa)) are tyrosine glycosyltransferase PaToxG. UDP-N-acetyl-alpha-D-glucosamine-binding positions include 2169–2171 (IWI) and 2259–2260 (SD). 2 residues coordinate a divalent metal cation: Asp-2276 and Asp-2278. The short motif at 2276 to 2279 (DIDD) is the DxDD motif element. Asn-2312 contributes to the UDP-N-acetyl-alpha-D-glucosamine binding site. The tract at residues 2450–2672 (KTEMLPPVPS…NYSVNPTAEN (223 aa)) is sseI-like deamidase PaToxD. Catalysis depends on for deamidase activity residues Cys-2509, His-2547, and Asp-2562. The tract at residues 2667–2705 (NPTAENLSPPPPPPIPSHGQVPKTVTPPPPPMRSPLSLS) is disordered.

Requires a divalent metal cation as cofactor.

The protein localises to the secreted. Its subcellular location is the host cell membrane. It catalyses the reaction L-tyrosyl-[protein] + UDP-N-acetyl-alpha-D-glucosamine = O-(N-acetyl-alpha-D-glucosaminyl)-L-tyrosyl-[protein] + UDP + H(+). The catalysed reaction is L-glutaminyl-[protein] + H2O = L-glutamyl-[protein] + NH4(+). Toxin that acts on host cells by modifying Rho proteins by tyrosine GlcNAcylation and heterotrimeric G alpha proteins by deamidation. Catalyzes the mono-O-GlcNAcylation of small GTPases of the Rho family (RhoA, RhoB, RhoC, Rac1, Rac2, Rac3, Cdc42) in eukaryotic host cells at the conserved tyrosine residue located in the switch I region (Tyr-32/34), using UDP-N-acetylglucosamine (UDP-GlcNAc) as the sugar donor; other GTPases of the Rho, Ras or Rab families are not substrates. Tyrosine glycosylation inhibits Rho activation and prevents interaction with downstream effectors, resulting in actin disassembly, inhibition of phagocytosis, cell rounding, and toxicity toward insects and mammalian cells. Also catalyzes the deamidation of the catalytic glutamine in heterotrimeric G alpha proteins (Gi, Gq/11), which blocks GTP hydrolysis and arrests the G proteins in a permanent active state leading to activation of Rho GTPases. Thus, PaTox hijacks host GTPase signaling in a bidirectional manner by deamidation-induced activation and glycosylation-induced inactivation of GTPases. The polypeptide is Toxin PAU_02230 (Photorhabdus asymbiotica subsp. asymbiotica (strain ATCC 43949 / 3105-77) (Xenorhabdus luminescens (strain 2))).